The primary structure comprises 448 residues: U1 small nuclear ribonucleoprotein 70 kDa (448 aa).

The interval 91–201 is required for interaction with U1 RNA; that stretch reads TEIKNATEDP…GGGLGGTRRG (111 aa). Residues 102 to 180 enclose the RRM domain; sequence RTLFIARINY…KRVLVDVERA (79 aa). The tract at residues 188–448 is disordered; sequence PRRLGGGLGG…SSGDPSWWRQ (261 aa). Positions 191–200 are enriched in gly residues; that stretch reads LGGGLGGTRR. Composition is skewed to basic and acidic residues over residues 206-234 and 262-272; these read NIKHSGREDNERERERYRLEREREDREGP and ERRDRERDRGR. Basic residues predominate over residues 281 to 293; sequence SRSRSRERRKRRA. Composition is skewed to basic and acidic residues over residues 294-320 and 346-376; these read GSRERYDEFDRRDRRDRERERDRDRER and RDRERGTGSGGDVKERKPDFRDMDVIKIKEE. Residues 405 to 425 form a mediates binding to Psi region; it reads RPPPAHHNMFSVPPPPILGRG. A compositionally biased stretch (polar residues) spans 426–448; that stretch reads NASTNPNPDNGQQSSGDPSWWRQ.

Component of the U1 snRNP. Interacts with Psi; essential for alternative splicing of P-element transposase. Interacts with the SMN complex.

Its subcellular location is the nucleus speckle. The protein localises to the nucleus. It localises to the nucleoplasm. Functionally, mediates the splicing of pre-mRNA by binding to the stem loop I region of U1-snRNA. Required during oogenesis for nurse cell chromatin dispersal. This Drosophila melanogaster (Fruit fly) protein is U1 small nuclear ribonucleoprotein 70 kDa (snRNP-U1-70K).